We begin with the raw amino-acid sequence, 659 residues long: DNA ligase (659 aa).

NAD(+) is bound by residues 32–36 (DAEYD), 81–82 (SL), and glutamate 110. The active-site N6-AMP-lysine intermediate is the lysine 112. 4 residues coordinate NAD(+): arginine 133, glutamate 168, lysine 284, and lysine 308. Zn(2+) contacts are provided by cysteine 402, cysteine 405, cysteine 420, and cysteine 425. The region spanning 582–659 (AKPQIFAGKS…SEEEFAELLP (78 aa)) is the BRCT domain.

This sequence belongs to the NAD-dependent DNA ligase family. LigA subfamily. It depends on Mg(2+) as a cofactor. Mn(2+) is required as a cofactor.

It catalyses the reaction NAD(+) + (deoxyribonucleotide)n-3'-hydroxyl + 5'-phospho-(deoxyribonucleotide)m = (deoxyribonucleotide)n+m + AMP + beta-nicotinamide D-nucleotide.. In terms of biological role, DNA ligase that catalyzes the formation of phosphodiester linkages between 5'-phosphoryl and 3'-hydroxyl groups in double-stranded DNA using NAD as a coenzyme and as the energy source for the reaction. It is essential for DNA replication and repair of damaged DNA. The protein is DNA ligase of Desulfitobacterium hafniense (strain DSM 10664 / DCB-2).